The primary structure comprises 522 residues: 5,6-dihydroxyindole-2-carboxylic acid oxidase (522 aa).

An N-terminal signal peptide occupies residues 1–21 (MLRTSCGGMLLLVHALGLVRA). The Lumenal, melanosome portion of the chain corresponds to 22–470 (QFPRACVTPE…RPLTPTQIVT (449 aa)). Disulfide bonds link Cys27-Cys38, Cys39-Cys59, Cys50-Cys89, Cys91-Cys100, and Cys103-Cys112. 2 N-linked (GlcNAc...) asparagine glycosylation sites follow: Asn164 and Asn171. Zn(2+)-binding residues include His182, His205, and His214. 2 disulfides stabilise this stretch: Cys248-Cys251 and Cys280-Cys293. The N-linked (GlcNAc...) asparagine glycan is linked to Asn294. 2 residues coordinate Zn(2+): His367 and His371. A glycan (N-linked (GlcNAc...) asparagine) is linked at Asn375. Residue His394 participates in Zn(2+) binding. Residues 471-491 (VAVVAALLLVAIIFAASTCVV) traverse the membrane as a helical segment. The Cytoplasmic portion of the chain corresponds to 492–522 (HLRGNRTEGRQPLLGDQYQRYEDHNKTQSVV).

It belongs to the tyrosinase family. Cu(2+) is required as a cofactor. Zn(2+) serves as cofactor.

It is found in the melanosome membrane. The catalysed reaction is 2 5,6-dihydroxyindole-2-carboxylate + O2 = 2 indole-5,6-quinone-2-carboxylate + 2 H2O. The protein operates within pigment biosynthesis; melanin biosynthesis. Its function is as follows. Plays a role in melanin biosynthesis. Catalyzes the oxidation of 5,6-dihydroxyindole-2-carboxylic acid (DHICA) into indole-5,6-quinone-2-carboxylic acid. May regulate or influence the type of melanin synthesized. Also to a lower extent, capable of hydroxylating tyrosine and producing melanin. This Carassius auratus (Goldfish) protein is 5,6-dihydroxyindole-2-carboxylic acid oxidase (tyrp1).